The primary structure comprises 75 residues: Carwaprin-b (75 aa).

The signal sequence occupies residues Met-1–Ser-24. A WAP domain is found at Arg-27–Ile-72. 4 cysteine pairs are disulfide-bonded: Cys-34–Cys-60, Cys-43–Cys-64, Cys-47–Cys-59, and Cys-53–Cys-68.

The protein belongs to the venom waprin family. Expressed by the venom gland.

The protein localises to the secreted. In terms of biological role, damages membranes of susceptible bacteria. Has no hemolytic activity. Not toxic to mice. Does not inhibit the proteinases elastase and cathepsin G. The chain is Carwaprin-b from Tropidechis carinatus (Australian rough-scaled snake).